The chain runs to 480 residues: Acetyl-coenzyme A carboxylase carboxyl transferase subunit beta, chloroplastic (480 aa).

Positions T25–N48 are disordered. Positions S35–K47 are enriched in basic and acidic residues. Positions L216 to N480 constitute a CoA carboxyltransferase N-terminal domain. Zn(2+)-binding residues include C220, C223, C239, and C242. Residues C220–C242 form a C4-type zinc finger.

This sequence belongs to the AccD/PCCB family. In terms of assembly, acetyl-CoA carboxylase is a heterohexamer composed of biotin carboxyl carrier protein, biotin carboxylase and 2 subunits each of ACCase subunit alpha and ACCase plastid-coded subunit beta (accD). Zn(2+) is required as a cofactor.

It localises to the plastid. It is found in the chloroplast stroma. It catalyses the reaction N(6)-carboxybiotinyl-L-lysyl-[protein] + acetyl-CoA = N(6)-biotinyl-L-lysyl-[protein] + malonyl-CoA. Its pathway is lipid metabolism; malonyl-CoA biosynthesis; malonyl-CoA from acetyl-CoA: step 1/1. Functionally, component of the acetyl coenzyme A carboxylase (ACC) complex. Biotin carboxylase (BC) catalyzes the carboxylation of biotin on its carrier protein (BCCP) and then the CO(2) group is transferred by the transcarboxylase to acetyl-CoA to form malonyl-CoA. This is Acetyl-coenzyme A carboxylase carboxyl transferase subunit beta, chloroplastic from Helianthus annuus (Common sunflower).